Reading from the N-terminus, the 200-residue chain is Urease accessory protein UreE (200 aa).

Residues 171-200 (HHGHAHPHPHDHDHQHGPGCAHGRHGHDHH) are disordered.

It belongs to the UreE family.

It is found in the cytoplasm. Functionally, involved in urease metallocenter assembly. Binds nickel. Probably functions as a nickel donor during metallocenter assembly. The protein is Urease accessory protein UreE of Burkholderia vietnamiensis (strain G4 / LMG 22486) (Burkholderia cepacia (strain R1808)).